A 308-amino-acid polypeptide reads, in one-letter code: Porphobilinogen deaminase (308 aa).

Cys241 bears the S-(dipyrrolylmethanemethyl)cysteine mark.

Belongs to the HMBS family. As to quaternary structure, monomer. It depends on dipyrromethane as a cofactor.

The catalysed reaction is 4 porphobilinogen + H2O = hydroxymethylbilane + 4 NH4(+). It participates in porphyrin-containing compound metabolism; protoporphyrin-IX biosynthesis; coproporphyrinogen-III from 5-aminolevulinate: step 2/4. In terms of biological role, tetrapolymerization of the monopyrrole PBG into the hydroxymethylbilane pre-uroporphyrinogen in several discrete steps. This Staphylococcus aureus (strain Newman) protein is Porphobilinogen deaminase.